We begin with the raw amino-acid sequence, 212 residues long: MPQTDKQICIPPELPELLKQFTKAAIRSQPQDLIQWAAEYFGAMSRGEIPPVRERSERVALSNWAELTPELLKILHSRVGGRLIVQADELAQMWKVLNLPTDLFNSVMNVGRFTEEIEWLKFLALACSSLGVTIAKTLKIVCEVLSSDHDSGPPRIPFSTFQFLYTYIAEVDGEISASHVSRMLNYIEQEVIGPDGLIKVNDFTQNPRVRLE.

Residues 12–43 (PELPELLKQFTKAAIRSQPQDLIQWAAEYFGA) form the RIIa domain. Phosphoserine is present on serine 56. The tract at residues 209 to 212 (VRLE) is interaction with RHPN1.

The protein belongs to the ropporin family. In terms of assembly, homodimer. Interacts with AKAP3. May interact with SPA17. Interacts with RHPN1. Interacts with FSCB; the interaction increases upon spermatozoa capacitation conditions. Interacts with CFAP61. Post-translationally, sumoylated, sumoylation decreases upon spermatozoa capacitation conditions.

It is found in the cell projection. Its subcellular location is the cilium. The protein localises to the flagellum. Functionally, important for male fertility. With ROPN1L, involved in fibrous sheath integrity and sperm motility, plays a role in PKA-dependent signaling processes required for spermatozoa capacitation. The protein is Ropporin-1 (ROPN1) of Bos taurus (Bovine).